The chain runs to 99 residues: uncharacterized protein (99 aa).

The tract at residues 1–99 (MSDFPPSYQQ…KYHSKSDVGF (99 aa)) is disordered. A compositionally biased stretch (polar residues) spans 19-29 (QESSTSNNASE).

This is an uncharacterized protein from Schizosaccharomyces pombe (strain 972 / ATCC 24843) (Fission yeast).